A 128-amino-acid chain; its full sequence is L-ectoine synthase (128 aa).

This sequence belongs to the ectoine synthase family.

The catalysed reaction is (2S)-4-acetamido-2-aminobutanoate = L-ectoine + H2O. The protein operates within amine and polyamine biosynthesis; ectoine biosynthesis; L-ectoine from L-aspartate 4-semialdehyde: step 3/3. Catalyzes the circularization of gamma-N-acetyl-alpha,gamma-diaminobutyric acid (ADABA) to ectoine (1,4,5,6-tetrahydro-2-methyl-4-pyrimidine carboxylic acid), which is an excellent osmoprotectant. This Aliivibrio fischeri (strain MJ11) (Vibrio fischeri) protein is L-ectoine synthase.